The primary structure comprises 94 residues: Co-chaperonin GroES (94 aa).

Belongs to the GroES chaperonin family. Heptamer of 7 subunits arranged in a ring. Interacts with the chaperonin GroEL.

The protein resides in the cytoplasm. Its function is as follows. Together with the chaperonin GroEL, plays an essential role in assisting protein folding. The GroEL-GroES system forms a nano-cage that allows encapsulation of the non-native substrate proteins and provides a physical environment optimized to promote and accelerate protein folding. GroES binds to the apical surface of the GroEL ring, thereby capping the opening of the GroEL channel. The chain is Co-chaperonin GroES from Streptococcus pneumoniae serotype 19F (strain G54).